We begin with the raw amino-acid sequence, 183 residues long: Interleukin-36 beta (183 aa).

A propeptide spanning residues 1-30 is cleaved from the precursor; it reads MMAFPPQSCVHVLPPKSIQMWEPNHNTMHG.

The protein belongs to the IL-1 family. As to quaternary structure, interacts with cargo receptor TMED10; the interaction mediates the translocation from the cytoplasm into the ERGIC (endoplasmic reticulum-Golgi intermediate compartment) and thereby secretion. Post-translationally, N-terminal truncation leads to a dramatic enhancement of its activity (&gt;1000-fold).

The protein resides in the cytoplasm. It localises to the secreted. Its function is as follows. Cytokine that binds to and signals through the IL1RL2/IL-36R receptor which in turn activates NF-kappa-B and MAPK signaling pathways in target cells linked to a pro-inflammatory response. Part of the IL-36 signaling system that is thought to be present in epithelial barriers and to take part in local inflammatory response; similar to the IL-1 system with which it shares the coreceptor IL1RAP. Stimulates production of interleukin-6 and interleukin-8 in synovial fibrobasts, articular chondrocytes and mature adipocytes. Induces expression of a number of antimicrobial peptides including beta-defensin 4 and beta-defensin 103 as well as a number of matrix metalloproteases. Seems to be involved in skin inflammatory response by acting on keratinocytes, dendritic cells and indirectly on T-cells to drive tissue infiltration, cell maturation and cell proliferation. Induces the production of pro-inflammatory cytokines in bone marrow-derived dendritic cells (BMDCs), including IL-12, Il-1 beta, IL-6, TNF-alpha and IL-23, and activates p38 MAPK phosphorylation in BMDCs. Involved in dendritic cell maturation by stimulating the surface expression of CD80, CD86 and MHC class II. Induces the production of IFN-gamma, IL-4 and IL-17 by T-helper 1 (Th1) cells, cultured CD4(+) T-cells and splenocytes. This Mus musculus (Mouse) protein is Interleukin-36 beta.